A 315-amino-acid polypeptide reads, in one-letter code: Olfactory receptor 11A1 (315 aa).

Residues 1–27 (MEIVSTGNETITEFVLLGFYDIPELHF) are Extracellular-facing. Asn-8 is a glycosylation site (N-linked (GlcNAc...) asparagine). The chain crosses the membrane as a helical span at residues 28-48 (LFFIVFTAVYVFIIIGNMLII). Topologically, residues 49-56 (VAVVSSQR) are cytoplasmic. The chain crosses the membrane as a helical span at residues 57-77 (LHKPMYIFLANLSFLDILYTS). Over 78 to 100 (AVMPKMLEGFLQEATISVAGCLL) the chain is Extracellular. Cys-98 and Cys-190 are oxidised to a cystine. A helical transmembrane segment spans residues 101–121 (QFFIFGSLATAECLLLAVMAY). Topologically, residues 122-140 (DRYLAICYPLHYPLLMGPR) are cytoplasmic. The helical transmembrane segment at 141–161 (RYMGLVVTTWLSGFVVDGLVV) threads the bilayer. The Extracellular segment spans residues 162–198 (ALVAQLRFCGPNHIDQFYCDFMLFVGLACSDPRVAQV). A helical transmembrane segment spans residues 199-218 (TTLILSVFCLTIPFGLILTS). Residues 219 to 238 (YARIVVAVLRVPAGASRRRA) are Cytoplasmic-facing. The chain crosses the membrane as a helical span at residues 239-259 (FSTCSSHLAVVTTFYGTLMIF). The Extracellular portion of the chain corresponds to 260–272 (YVAPSAVHSQLLS). A helical membrane pass occupies residues 273–293 (KVFSLLYTVVTPLFNPVIYTM). Residues 294 to 315 (RNKEVHQALRKILCIKQTETLD) are Cytoplasmic-facing.

It belongs to the G-protein coupled receptor 1 family.

The protein resides in the cell membrane. In terms of biological role, odorant receptor. In Homo sapiens (Human), this protein is Olfactory receptor 11A1 (OR11A1).